The chain runs to 340 residues: Solute carrier family 35 member G3 (340 aa).

Residues 11-33 (PDFTQPSPPSTPASLPSKHHHRC) are disordered. A run of 9 helical transmembrane segments spans residues 39–59 (TKGL…VGPF), 69–89 (LPSL…ALLL), 107–127 (FLHA…VQVV), 160–180 (AWCG…PGLG), 189–209 (LYTA…SLGL), 223–243 (TVAF…LFVL), 257–277 (CVVA…YAVT), 283–303 (LVCA…YYVL), and 307–327 (VAPS…IITA). An EamA 1 domain is found at 51–176 (LSAGFVGPFS…STLGLIIIVG (126 aa)). An EamA 2 domain is found at 274–327 (YAVTKAHPALVCAVLHSEVVVALMLQYYVLYETVAPSDIMGAGVVLGSIAIITA).

The protein belongs to the SLC35G solute transporter family.

Its subcellular location is the membrane. The sequence is that of Solute carrier family 35 member G3 (Slc35g3) from Mus musculus (Mouse).